The sequence spans 643 residues: 1-deoxy-D-xylulose-5-phosphate synthase (643 aa).

Thiamine diphosphate-binding positions include His-71 and 112–114; that span reads SHA. Asp-144 is a Mg(2+) binding site. Thiamine diphosphate-binding positions include 145–146, Asn-173, Tyr-284, and Glu-365; that span reads GA. Residue Asn-173 participates in Mg(2+) binding.

This sequence belongs to the transketolase family. DXPS subfamily. Homodimer. Requires Mg(2+) as cofactor. It depends on thiamine diphosphate as a cofactor.

The enzyme catalyses D-glyceraldehyde 3-phosphate + pyruvate + H(+) = 1-deoxy-D-xylulose 5-phosphate + CO2. The protein operates within metabolic intermediate biosynthesis; 1-deoxy-D-xylulose 5-phosphate biosynthesis; 1-deoxy-D-xylulose 5-phosphate from D-glyceraldehyde 3-phosphate and pyruvate: step 1/1. In terms of biological role, catalyzes the acyloin condensation reaction between C atoms 2 and 3 of pyruvate and glyceraldehyde 3-phosphate to yield 1-deoxy-D-xylulose-5-phosphate (DXP). This Mycobacterium leprae (strain Br4923) protein is 1-deoxy-D-xylulose-5-phosphate synthase.